The primary structure comprises 561 residues: MIRFEDVSVTYDGAAEPTVRGVDFTVPEGELVLLVGPSGVGKSTVLGAVSGLVPHFTGGTLRGRVTVAGRDTRTHKPRELADVVGTVGQDPLSHFVTDTVEDELAYGMESLGIAPDVMRRRVEETLDLLGLAELRDRPISTLSGGQQQRVAIGSVLTPHPKVLVLDEPTSALDPAAAEEVLAVLQRLVHDLGTTVLMAEHRLERVVQYADRVALLPAPGAPLTLGTPPEVMAASPVYPPVVDLGRLAGWSPLPLTVRDARRRAGALRERLAATETPTPTATATATAAPAPSPSRPRRPRLLRKRAPVPSAALPVAAVEALAVRRGRVEALRRVDLTASPGEIIALMGRNGAGKSTLLGALVGLVPPAGGSVRVGGAVPHRTAPRDLVRRVGLVPQEPRDLLYADTVAAECVAADGDAGAEPGTCRALVSELLPGVADGTHPRDLSEGQRLALALAVVLTARPPLLLLDEPTRGLDYAAKGRLVTLLRALAADGHAIVLATHDVELAAELAHRVVILAAGEVVADGPTAEVVVASPSFAPQVTKILAPQHWLTVTQVREALA.

The ABC transporter 1 domain occupies 2–243 (IRFEDVSVTY…SPVYPPVVDL (242 aa)). Residue 36–43 (GPSGVGKS) participates in ATP binding. Residues 268-299 (ERLAATETPTPTATATATAAPAPSPSRPRRPR) are disordered. The segment covering 272 to 288 (ATETPTPTATATATAAP) has biased composition (low complexity). The region spanning 315 to 543 (AAVEALAVRR…SPSFAPQVTK (229 aa)) is the ABC transporter 2 domain. Residue 347–354 (GRNGAGKS) participates in ATP binding.

This sequence belongs to the ABC transporter superfamily.

Its subcellular location is the cell membrane. Functionally, probably part of an ABC transporter complex. Responsible for energy coupling to the transport system. This chain is Putative ABC transporter ATP-binding protein SAV_5847, found in Streptomyces avermitilis (strain ATCC 31267 / DSM 46492 / JCM 5070 / NBRC 14893 / NCIMB 12804 / NRRL 8165 / MA-4680).